The chain runs to 29 residues: Trypsin inhibitor 3 (29 aa).

Cystine bridges form between C3–C20, C10–C22, and C16–C28.

The protein belongs to the protease inhibitor I7 (squash-type serine protease inhibitor) family.

Its subcellular location is the secreted. Functionally, inhibits trypsin. This is Trypsin inhibitor 3 from Luffa aegyptiaca (Sponge gourd).